The chain runs to 180 residues: Endoribonuclease YbeY (180 aa).

Zn(2+) is bound by residues H149, H153, and H159.

Belongs to the endoribonuclease YbeY family. Zn(2+) serves as cofactor.

It is found in the cytoplasm. Functionally, single strand-specific metallo-endoribonuclease involved in late-stage 70S ribosome quality control and in maturation of the 3' terminus of the 16S rRNA. This chain is Endoribonuclease YbeY, found in Prochlorococcus marinus subsp. pastoris (strain CCMP1986 / NIES-2087 / MED4).